Consider the following 66-residue polypeptide: Large ribosomal subunit protein bL31 (66 aa).

The Zn(2+) site is built by Cys16, Cys18, Cys36, and Cys39.

This sequence belongs to the bacterial ribosomal protein bL31 family. Type A subfamily. In terms of assembly, part of the 50S ribosomal subunit. Requires Zn(2+) as cofactor.

Its function is as follows. Binds the 23S rRNA. This chain is Large ribosomal subunit protein bL31, found in Bacillus licheniformis (strain ATCC 14580 / DSM 13 / JCM 2505 / CCUG 7422 / NBRC 12200 / NCIMB 9375 / NCTC 10341 / NRRL NRS-1264 / Gibson 46).